Consider the following 284-residue polypeptide: Prolyl 4-hydroxylase subunit alpha (284 aa).

Residues 169-284 (NFNSIKTQTQ…PRIAITTWIY (116 aa)) enclose the Fe2OG dioxygenase domain. Fe cation-binding residues include His-191, Asp-193, and His-266. Arg-276 is a binding site for 2-oxoglutarate.

It belongs to the P4HA family. As to quaternary structure, heterotetramer of two alpha-1 chains and two beta chains (the beta chain is the multi-functional PDI). Fe(2+) is required as a cofactor. Requires L-ascorbate as cofactor.

It localises to the cytoplasm. The enzyme catalyses L-prolyl-[Skp1 protein] + 2-oxoglutarate + O2 = trans-4-hydroxy-L-prolyl-[Skp1 protein] + succinate + CO2. With respect to regulation, inhibited by the prolyl-hydroxylase inhibitors alpha,alpha'-dipyridyl and ethyl 3,4-dihydroxybenzoate. In terms of biological role, catalyzes the post-translational formation of 4-hydroxyproline. Probably hydroxylates skp1 on Pro-143. The sequence is that of Prolyl 4-hydroxylase subunit alpha (phyA) from Dictyostelium discoideum (Social amoeba).